The chain runs to 156 residues: 3-dehydroquinate dehydratase (156 aa).

Residue Tyr-31 is the Proton acceptor of the active site. Substrate-binding residues include Asn-83, His-89, and Asp-96. His-109 functions as the Proton donor in the catalytic mechanism. Residues 110–111 (LS) and Arg-120 contribute to the substrate site.

The protein belongs to the type-II 3-dehydroquinase family. In terms of assembly, homododecamer.

The enzyme catalyses 3-dehydroquinate = 3-dehydroshikimate + H2O. Its pathway is metabolic intermediate biosynthesis; chorismate biosynthesis; chorismate from D-erythrose 4-phosphate and phosphoenolpyruvate: step 3/7. In terms of biological role, catalyzes a trans-dehydration via an enolate intermediate. The sequence is that of 3-dehydroquinate dehydratase from Chromobacterium violaceum (strain ATCC 12472 / DSM 30191 / JCM 1249 / CCUG 213 / NBRC 12614 / NCIMB 9131 / NCTC 9757 / MK).